Reading from the N-terminus, the 75-residue chain is Small ribosomal subunit protein bS16c (75 aa).

It belongs to the bacterial ribosomal protein bS16 family.

The protein localises to the plastid. It localises to the chloroplast. The chain is Small ribosomal subunit protein bS16c from Cyanidium caldarium (Red alga).